Consider the following 239-residue polypeptide: Ribosomal RNA large subunit methyltransferase E (239 aa).

5 residues coordinate S-adenosyl-L-methionine: G88, W90, D111, D127, and D151. The active-site Proton acceptor is the K191.

The protein belongs to the class I-like SAM-binding methyltransferase superfamily. RNA methyltransferase RlmE family.

The protein localises to the cytoplasm. The catalysed reaction is uridine(2552) in 23S rRNA + S-adenosyl-L-methionine = 2'-O-methyluridine(2552) in 23S rRNA + S-adenosyl-L-homocysteine + H(+). In terms of biological role, specifically methylates the uridine in position 2552 of 23S rRNA at the 2'-O position of the ribose in the fully assembled 50S ribosomal subunit. The polypeptide is Ribosomal RNA large subunit methyltransferase E (Bartonella bacilliformis (strain ATCC 35685 / KC583 / Herrer 020/F12,63)).